The primary structure comprises 519 residues: Bifunctional purine biosynthesis protein PurH (519 aa).

One can recognise an MGS-like domain in the interval 1 to 145; it reads MQPIQRALIS…KNHASVTVVV (145 aa).

Belongs to the PurH family.

It catalyses the reaction (6R)-10-formyltetrahydrofolate + 5-amino-1-(5-phospho-beta-D-ribosyl)imidazole-4-carboxamide = 5-formamido-1-(5-phospho-D-ribosyl)imidazole-4-carboxamide + (6S)-5,6,7,8-tetrahydrofolate. It carries out the reaction IMP + H2O = 5-formamido-1-(5-phospho-D-ribosyl)imidazole-4-carboxamide. It functions in the pathway purine metabolism; IMP biosynthesis via de novo pathway; 5-formamido-1-(5-phospho-D-ribosyl)imidazole-4-carboxamide from 5-amino-1-(5-phospho-D-ribosyl)imidazole-4-carboxamide (10-formyl THF route): step 1/1. Its pathway is purine metabolism; IMP biosynthesis via de novo pathway; IMP from 5-formamido-1-(5-phospho-D-ribosyl)imidazole-4-carboxamide: step 1/1. This is Bifunctional purine biosynthesis protein PurH from Allochromatium vinosum (strain ATCC 17899 / DSM 180 / NBRC 103801 / NCIMB 10441 / D) (Chromatium vinosum).